The chain runs to 451 residues: uncharacterized protein (451 aa).

Aspartate 305, aspartate 316, histidine 384, glutamate 414, and glutamate 428 together coordinate Mn(2+).

Belongs to the peptidase M24B family. Mn(2+) serves as cofactor.

This is an uncharacterized protein from Schizosaccharomyces pombe (strain 972 / ATCC 24843) (Fission yeast).